Here is a 449-residue protein sequence, read N- to C-terminus: UNC93-like protein MFSD11 (449 aa).

The helical transmembrane segment at 8-28 (LFNIVILGVAFMFMFTAFQTC) threads the bilayer. N-linked (GlcNAc...) asparagine glycosylation is present at N40. Transmembrane regions (helical) follow at residues 53-73 (AIIYGVFSASNLITPSVVAIV), 74-94 (GPQISMFVSGLFYSMYIAVFI), 96-116 (PFPWSFYTASVFIGIAAAVLW), 138-158 (IFWALLQSSLFFGNLYIYFAW), and 170-190 (RTVFIALTVISLVGTVLFFLI). Position 204 is a phosphoserine (S204). 6 helical membrane passes run 239–259 (MLLLSVTTAYTGLELTFFSGV), 277–297 (LIGLSGIFIGIGEILGGSLFG), 309–329 (PVVLLGTLVHFVAFYLIFLNM), 359–379 (FLLGLGDSCFNTQLLSILGFL), 385–405 (APAFAVFKFVQSICAAVAFFY), and 410–430 (LLHWQLLVMVIFGFFGTISFF).

The protein belongs to the unc-93 family. In terms of tissue distribution, widely expressed.

It localises to the membrane. The protein is UNC93-like protein MFSD11 (Mfsd11) of Mus musculus (Mouse).